The following is a 760-amino-acid chain: Penicillin-binding protein 1B (760 aa).

Topologically, residues 1 to 8 (MFFNFKKY) are cytoplasmic. A helical; Signal-anchor for type II membrane protein transmembrane segment spans residues 9–29 (FLIKVFFFVLILTLCYGLYLY). Residues 30-760 (VKINRFINGK…NFLFWLKNLF (731 aa)) lie on the Extracellular side of the membrane. The interval 136-308 (FRLEPKLIAM…SLYSPWTNPN (173 aa)) is transglycosylase. Glu-174 functions as the Proton donor; for transglycosylase activity in the catalytic mechanism. Residues 392-684 (EQAVKIEIPI…SSGAMQIYKR (293 aa)) form a transpeptidase region. The active-site Acyl-ester intermediate; for transpeptidase activity is Ser-451.

In the N-terminal section; belongs to the glycosyltransferase 51 family. The protein in the C-terminal section; belongs to the transpeptidase family.

Its subcellular location is the cell membrane. The enzyme catalyses [GlcNAc-(1-&gt;4)-Mur2Ac(oyl-L-Ala-gamma-D-Glu-L-Lys-D-Ala-D-Ala)](n)-di-trans,octa-cis-undecaprenyl diphosphate + beta-D-GlcNAc-(1-&gt;4)-Mur2Ac(oyl-L-Ala-gamma-D-Glu-L-Lys-D-Ala-D-Ala)-di-trans,octa-cis-undecaprenyl diphosphate = [GlcNAc-(1-&gt;4)-Mur2Ac(oyl-L-Ala-gamma-D-Glu-L-Lys-D-Ala-D-Ala)](n+1)-di-trans,octa-cis-undecaprenyl diphosphate + di-trans,octa-cis-undecaprenyl diphosphate + H(+). It catalyses the reaction Preferential cleavage: (Ac)2-L-Lys-D-Ala-|-D-Ala. Also transpeptidation of peptidyl-alanyl moieties that are N-acyl substituents of D-alanine.. It participates in cell wall biogenesis; peptidoglycan biosynthesis. Cell wall formation. Synthesis of cross-linked peptidoglycan from the lipid intermediates. The enzyme has a penicillin-insensitive transglycosylase N-terminal domain (formation of linear glycan strands) and a penicillin-sensitive transpeptidase C-terminal domain (cross-linking of the peptide subunits). The protein is Penicillin-binding protein 1B (mrcB) of Buchnera aphidicola subsp. Acyrthosiphon pisum (strain APS) (Acyrthosiphon pisum symbiotic bacterium).